The following is a 324-amino-acid chain: Homocysteine S-methyltransferase 1 (324 aa).

A Hcy-binding domain is found at 6–320; it reads IKELIVEHPG…KDIAEIASAV (315 aa). Zn(2+)-binding residues include Cys238, Cys305, and Cys306.

Zn(2+) is required as a cofactor.

The protein localises to the cytoplasm. The catalysed reaction is S-methyl-L-methionine + L-homocysteine = 2 L-methionine + H(+). Functionally, homocysteine S-methyltransferase involved in the conversion of S-adenosylmethionine (AdoMet) to methionine to control the methionine/AdoMet ratio. Also converts S-methylmethionine (SMM) to methionine. This is Homocysteine S-methyltransferase 1 (MHT1) from Saccharomyces cerevisiae (strain ATCC 204508 / S288c) (Baker's yeast).